Consider the following 185-residue polypeptide: Protein LURP-one-related 13 (185 aa).

It belongs to the LOR family.

Its function is as follows. Might be related to the phospholipid scramblase and tubby-like superfamily of membrane tethered transcription factors. The protein is Protein LURP-one-related 13 of Arabidopsis thaliana (Mouse-ear cress).